Here is an 856-residue protein sequence, read N- to C-terminus: Probable alpha,alpha-trehalose-phosphate synthase [UDP-forming] 8 (856 aa).

A Phosphoserine modification is found at Ser-5. Thr-32 bears the Phosphothreonine mark. The interval 57-541 is glycosyltransferase; sequence ERKIIVANML…AKSFMQDLER (485 aa).

It in the N-terminal section; belongs to the glycosyltransferase 20 family. The protein in the C-terminal section; belongs to the trehalose phosphatase family. Expressed in leaves, roots, stems and flowers.

The catalysed reaction is D-glucose 6-phosphate + UDP-alpha-D-glucose = alpha,alpha-trehalose 6-phosphate + UDP + H(+). This chain is Probable alpha,alpha-trehalose-phosphate synthase [UDP-forming] 8 (TPS8), found in Arabidopsis thaliana (Mouse-ear cress).